A 639-amino-acid chain; its full sequence is Kinesin-like protein KIF22 (639 aa).

The 328-residue stretch at Arg-18–Ile-345 folds into the Kinesin motor domain. Gly-102 to Thr-109 is an ATP binding site. Residues Ile-358 to Ser-400 form a disordered region. The span at Thr-388–Asp-397 shows a compositional bias: polar residues. The stretch at Lys-439–Asp-484 forms a coiled coil. The Important for regulated proteolytic degradation signature appears at Gly-549–Asn-552.

This sequence belongs to the TRAFAC class myosin-kinesin ATPase superfamily. Kinesin family. Ubiquitinated, leading to its subsequent proteasomal degradation.

The protein localises to the nucleus. It is found in the cytoplasm. The protein resides in the cytoskeleton. In terms of biological role, kinesin family member that is involved in spindle formation and the movements of chromosomes during mitosis and meiosis. Binds to microtubules and to DNA. The protein is Kinesin-like protein KIF22 (kif22) of Xenopus tropicalis (Western clawed frog).